Consider the following 218-residue polypeptide: Elongation factor Ts (218 aa).

The interval 82–85 (TDFV) is involved in Mg(2+) ion dislocation from EF-Tu.

The protein belongs to the EF-Ts family.

It localises to the cytoplasm. Functionally, associates with the EF-Tu.GDP complex and induces the exchange of GDP to GTP. It remains bound to the aminoacyl-tRNA.EF-Tu.GTP complex up to the GTP hydrolysis stage on the ribosome. In Prochlorococcus marinus (strain MIT 9313), this protein is Elongation factor Ts.